We begin with the raw amino-acid sequence, 594 residues long: Aspartate--tRNA(Asp/Asn) ligase (594 aa).

An L-aspartate-binding site is contributed by glutamate 175. An aspartate region spans residues 199 to 202; the sequence is QQFK. Positions 221 and 455 each coordinate L-aspartate. 221–223 lines the ATP pocket; the sequence is RDE. Glutamate 488 serves as a coordination point for ATP. Arginine 495 provides a ligand contact to L-aspartate. ATP is bound at residue 540–543; sequence GIDR.

This sequence belongs to the class-II aminoacyl-tRNA synthetase family. Type 1 subfamily. Homodimer.

It is found in the cytoplasm. The enzyme catalyses tRNA(Asx) + L-aspartate + ATP = L-aspartyl-tRNA(Asx) + AMP + diphosphate. Functionally, aspartyl-tRNA synthetase with relaxed tRNA specificity since it is able to aspartylate not only its cognate tRNA(Asp) but also tRNA(Asn). Reaction proceeds in two steps: L-aspartate is first activated by ATP to form Asp-AMP and then transferred to the acceptor end of tRNA(Asp/Asn). This is Aspartate--tRNA(Asp/Asn) ligase from Ruegeria sp. (strain TM1040) (Silicibacter sp.).